An 88-amino-acid chain; its full sequence is Small ribosomal subunit protein bS20 (88 aa).

A disordered region spans residues 1–36 (MANTSSAKKATRKIARRTAVNKSRRTQMRGSVRTVE).

It belongs to the bacterial ribosomal protein bS20 family.

In terms of biological role, binds directly to 16S ribosomal RNA. In Rhodopseudomonas palustris (strain HaA2), this protein is Small ribosomal subunit protein bS20.